Here is a 99-residue protein sequence, read N- to C-terminus: MLFRLLSPLSPLALTALLLFLLPPSDVSGLLLRPPPAPCLLLFLPFQILSGLLFLLFLPLFFSLPLLLSPSLPITMRFPARWRFLPWKAPSQPAAAFLF.

A helical membrane pass occupies residues 3-23 (FRLLSPLSPLALTALLLFLLP). 2 consecutive short sequence motifs (SH3-binding) follow at residues 4–11 (RLLSPLSP) and 33–38 (RPPPAP). The helical transmembrane segment at 48 to 68 (ILSGLLFLLFLPLFFSLPLLL) threads the bilayer. Short sequence motifs (SH3-binding) lie at residues 70-77 (PSLPITMR) and 88-93 (KAPSQP). Lys88 participates in a covalent cross-link: Glycyl lysine isopeptide (Lys-Gly) (interchain with G-Cter in ubiquitin); in isolate LAF.

This sequence belongs to the HTLV-1 accessory protein p12I family. P12I is a homodimer. Interacts with human CANX, CALR, ATP6V0C, IL2RB, IL2RG. Binds to MHC-I heavy chains HLA-A2, HLA-B7 and HLA-Cw4. In terms of processing, ubiquitinated; a fraction of P12I is degraded via the ubiquitin system.

The protein resides in the host endoplasmic reticulum membrane. Its subcellular location is the host Golgi apparatus. It is found in the host cis-Golgi network membrane. P12I is a modulator of T-lymphocyte proliferation and immune function and may contribute to establish a persistent infection. Binds and down-modulates cell surface expression of interleukin-2 receptors IL2RB and IL2RG. Also down-modulates cell surface MHC-I molecules by binding to free immature MHC-I heavy chains in the ER and targeting them to the proteasome for degradation. Binding to IL2RB mediates recruitment of JAK1 and JAK3. As a result of this interaction, p12I increases DNA-binding and transcriptional activity of STAT5. This chain is Accessory protein p12I, found in Homo sapiens (Human).